We begin with the raw amino-acid sequence, 466 residues long: MTYAPVTDVLSGKLAVDSEVTVRGWIRSRRDSKAGISFLAIYDGSCFDPIQAVVPNELNNYQEEVLKLTTGCSVEVTGKIVESPAKGQDFELAATEVKVVGLVEDPDTYPMAKTRHSIEYLREVAHLRPRTNIIGAVARVRNCLSQAIHRFYHEQGFFWMSAPLITASDCEGAGEMFRVSTLDMANVPMTDAGEVDYDKDFFGKETFLTVSGQLNAETYACALSKVYTFGPTFRAENSNTSRHLAEFWMVEPEVAFADLDDAAKLAEDMLKYVFKAVLEERRDDLEFFAQRINKEAITRLEQFVTSDFAQVDYTDAIQILQDSGRKFEFDVEWGIDMSSEHERYLAEEHFKAPVVVKNYPKDIKAFYMRMNDDGKTVAAMDVLAPGIGEIIGGSQREERLEHLDKRIAEMGIDASHIEWYRDLRRYGTVPHSGFGLGFERLVTYVTGMQNIRDVIPFPRAPRSANF.

This sequence belongs to the class-II aminoacyl-tRNA synthetase family. As to quaternary structure, homodimer.

It is found in the cytoplasm. The catalysed reaction is tRNA(Asn) + L-asparagine + ATP = L-asparaginyl-tRNA(Asn) + AMP + diphosphate + H(+). The polypeptide is Asparagine--tRNA ligase (Photobacterium profundum (strain SS9)).